The chain runs to 346 residues: Aspartate-semialdehyde dehydrogenase (346 aa).

NADP(+)-binding positions include 12-15 (SGAV) and 40-41 (RS). Arginine 101 is a phosphate binding site. Catalysis depends on cysteine 131, which acts as the Acyl-thioester intermediate. Residue glutamine 158 coordinates substrate. 161-162 (SG) serves as a coordination point for NADP(+). Lysine 225 is a binding site for phosphate. Substrate is bound at residue arginine 246. The active-site Proton acceptor is histidine 253. Glutamine 326 contacts NADP(+).

The protein belongs to the aspartate-semialdehyde dehydrogenase family. As to quaternary structure, homodimer.

The enzyme catalyses L-aspartate 4-semialdehyde + phosphate + NADP(+) = 4-phospho-L-aspartate + NADPH + H(+). The protein operates within amino-acid biosynthesis; L-lysine biosynthesis via DAP pathway; (S)-tetrahydrodipicolinate from L-aspartate: step 2/4. It functions in the pathway amino-acid biosynthesis; L-methionine biosynthesis via de novo pathway; L-homoserine from L-aspartate: step 2/3. Its pathway is amino-acid biosynthesis; L-threonine biosynthesis; L-threonine from L-aspartate: step 2/5. Functionally, catalyzes the NADPH-dependent formation of L-aspartate-semialdehyde (L-ASA) by the reductive dephosphorylation of L-aspartyl-4-phosphate. In Helicobacter pylori (strain J99 / ATCC 700824) (Campylobacter pylori J99), this protein is Aspartate-semialdehyde dehydrogenase.